Reading from the N-terminus, the 218-residue chain is N-(5'-phosphoribosyl)anthranilate isomerase (218 aa).

The protein belongs to the TrpF family.

It catalyses the reaction N-(5-phospho-beta-D-ribosyl)anthranilate = 1-(2-carboxyphenylamino)-1-deoxy-D-ribulose 5-phosphate. Its pathway is amino-acid biosynthesis; L-tryptophan biosynthesis; L-tryptophan from chorismate: step 3/5. This chain is N-(5'-phosphoribosyl)anthranilate isomerase, found in Alcanivorax borkumensis (strain ATCC 700651 / DSM 11573 / NCIMB 13689 / SK2).